The primary structure comprises 252 residues: Ubiquinone/menaquinone biosynthesis C-methyltransferase UbiE (252 aa).

S-adenosyl-L-methionine-binding positions include T71, D100, 124-125, and S141; that span reads DA.

Belongs to the class I-like SAM-binding methyltransferase superfamily. MenG/UbiE family.

It catalyses the reaction a 2-demethylmenaquinol + S-adenosyl-L-methionine = a menaquinol + S-adenosyl-L-homocysteine + H(+). The catalysed reaction is a 2-methoxy-6-(all-trans-polyprenyl)benzene-1,4-diol + S-adenosyl-L-methionine = a 5-methoxy-2-methyl-3-(all-trans-polyprenyl)benzene-1,4-diol + S-adenosyl-L-homocysteine + H(+). Its pathway is quinol/quinone metabolism; menaquinone biosynthesis; menaquinol from 1,4-dihydroxy-2-naphthoate: step 2/2. The protein operates within cofactor biosynthesis; ubiquinone biosynthesis. Methyltransferase required for the conversion of demethylmenaquinol (DMKH2) to menaquinol (MKH2) and the conversion of 2-polyprenyl-6-methoxy-1,4-benzoquinol (DDMQH2) to 2-polyprenyl-3-methyl-6-methoxy-1,4-benzoquinol (DMQH2). The polypeptide is Ubiquinone/menaquinone biosynthesis C-methyltransferase UbiE (Caulobacter sp. (strain K31)).